Reading from the N-terminus, the 434-residue chain is Indole diterpene prenyltransferase nodD2 (434 aa).

Residues 85–86 (LI) and E94 contribute to the L-tryptophan site. Substrate-binding residues include R107, K194, R268, K270, Y272, Q351, Y353, Y418, and Y422.

It belongs to the tryptophan dimethylallyltransferase family.

It functions in the pathway secondary metabolite biosynthesis. Indole diterpene prenyltransferase; part of the gene cluster that mediates the biosynthesis of the indole diterpenes nodulisporic acids (NA). Nodulisporic acid A (NAA) and its chemically modified derivatives are of particular significance because of their highly potent insecticidal activity against blood-feeding arthropods and lack of observable adverse effects on mammals, in particular the tremogenicity associated with the paspaline-derived IDTs is not observed. The geranylgeranyl diphosphate (GGPP) synthase ggs1, localized outside of the cluster, is proposed to catalyze the first step in nodulisporic acid biosynthesis via conversion of farnesyl pyrophosphate and isopentyl pyrophosphate into geranylgeranyl pyrophosphate (GGPP). Condensation of indole-3-glycerol phosphate with GGPP by the prenyl transferase nodC then forms 3-geranylgeranylindole (3-GGI). Epoxidation by the FAD-dependent monooxygenase nodM leads to a single-epoxidized-GGI that is substrate of the terpene cyclase nodB for cyclization to yield emindole SB. The terminal methyl carbon, C28, of emindole SB is then oxidized by the cytochrome P450 monooxygenase nodW to produce nodulisporic acid F (NAF), the pentacyclic core of NAA. NAF is converted to nodulisporic acid E (NAE) via prenylation. This step is probably performed by one of the indole diterpene prenyltransferases nodD1 or nodD2. Several oxidation steps performed by the FAD-linked oxidoreductase nodO and one of the cytochrome P450 monooxygenase nodR, nodX or nodZ further convert NAE to nodulisporic acid D (NAD). NAD is substrate of cytochrome P450 monooxygenase nodJ to produce the precursor of nodulisporic acid C (NAC), converted to NAC by one of the indole diterpene prenyltransferases nodD1 or nodD2. The FAD-dependent monooxygenase nodY2 then oxidizes NAC to nodulisporic acid B (NAB). Finally NAB is converted to NAA by one of the cytochrome P450 monooxygenases nodR, nodX or nodZ. This is Indole diterpene prenyltransferase nodD2 from Hypoxylon pulicicidum.